The sequence spans 423 residues: MVSNQDYTERIRDLMKDHNSWMESSINLIASENITSSRVKEALISDLSHRYAEGLPGERLYEGCRYIDEIEEITIELSKKLFRAEHANVQPTSGVVANLACFFATADVGDPMMAMEVPYGGHISHAKVSAAGVRGFKIYTHPFDFENMNIDADAMKKKILEVKPRIILFGGSLFLFPHPVEEAVEAAEEVGARIMYDGAHVLGLIAGGYFQDPLREGADMLVGSTHKTFPGPQGGIILCREELADDIDEAVFPGLVSNHHLHHVAGLGIATAEMLEFGSEYAAQTIRNAKKLAENLNELGFNVLCEHLDFTESHQVVMDVSDIGRAAEISKKLEANNIILNKNLLPWDDVNRSDDPSGIRIGTQEITRRGMKESEMSEVAEYIKKVVIDGRNVKEEVSEFMSSYTKVHYAFEESGAYKYMEIL.

121–123 contributes to the (6S)-5,6,7,8-tetrahydrofolate binding site; the sequence is GHI. An N6-(pyridoxal phosphate)lysine modification is found at lysine 227. Glutamate 242 provides a ligand contact to (6S)-5,6,7,8-tetrahydrofolate.

The protein belongs to the SHMT family. Homodimer. Pyridoxal 5'-phosphate is required as a cofactor.

The protein localises to the cytoplasm. It catalyses the reaction 5,10-methylenetetrahydromethanopterin + glycine + H2O = 5,6,7,8-tetrahydromethanopterin + L-serine. Its pathway is amino-acid biosynthesis; glycine biosynthesis; glycine from L-serine: step 1/1. Its function is as follows. Catalyzes the reversible interconversion of serine and glycine with tetrahydromethanopterin (H4MPT) serving as the one-carbon carrier. Also exhibits a pteridine-independent aldolase activity toward beta-hydroxyamino acids, producing glycine and aldehydes, via a retro-aldol mechanism. The protein is Serine hydroxymethyltransferase of Methanothermobacter marburgensis (strain ATCC BAA-927 / DSM 2133 / JCM 14651 / NBRC 100331 / OCM 82 / Marburg) (Methanobacterium thermoautotrophicum).